Here is a 561-residue protein sequence, read N- to C-terminus: Putative transport protein YbjL (561 aa).

Transmembrane regions (helical) follow at residues 8 to 28 (LLNG…LCLG), 32 to 52 (LGSV…LLGQ), 66 to 86 (FMLF…SIFF), 94 to 114 (MLAL…GKLF), and 158 to 178 (NLSL…IVGA). RCK C-terminal domains follow at residues 200 to 288 (RGLD…SFRN) and 292 to 373 (VFDR…RIGF). The next 5 membrane-spanning stretches (helical) occupy residues 383–403 (LLAF…TFQF), 406–426 (FSFG…LGFL), 447–467 (FGLM…ISNG), 475–495 (MLIA…LFGA), and 540–560 (AIAN…WPGL).

The protein belongs to the AAE transporter (TC 2.A.81) family. YbjL subfamily.

The protein resides in the cell membrane. This chain is Putative transport protein YbjL, found in Salmonella agona (strain SL483).